A 637-amino-acid polypeptide reads, in one-letter code: 1-deoxy-D-xylulose-5-phosphate synthase (637 aa).

Residues His76 and 117–119 each bind thiamine diphosphate; that span reads GHS. Residue Asp148 coordinates Mg(2+). Thiamine diphosphate is bound by residues 149–150, Asn177, Tyr294, and Glu381; that span reads GA. Asn177 provides a ligand contact to Mg(2+).

Belongs to the transketolase family. DXPS subfamily. In terms of assembly, homodimer. It depends on Mg(2+) as a cofactor. Thiamine diphosphate is required as a cofactor.

The enzyme catalyses D-glyceraldehyde 3-phosphate + pyruvate + H(+) = 1-deoxy-D-xylulose 5-phosphate + CO2. The protein operates within metabolic intermediate biosynthesis; 1-deoxy-D-xylulose 5-phosphate biosynthesis; 1-deoxy-D-xylulose 5-phosphate from D-glyceraldehyde 3-phosphate and pyruvate: step 1/1. Functionally, catalyzes the acyloin condensation reaction between C atoms 2 and 3 of pyruvate and glyceraldehyde 3-phosphate to yield 1-deoxy-D-xylulose-5-phosphate (DXP). The polypeptide is 1-deoxy-D-xylulose-5-phosphate synthase (Neisseria meningitidis serogroup B (strain ATCC BAA-335 / MC58)).